The following is a 453-amino-acid chain: Cytochrome P450 monooxygenase PC-20 (453 aa).

2 helical membrane passes run 5–25 (LGPFRTFTLLTVGLLLSLCVI) and 49–69 (LGVVLAEILASPEGFFHLFCV). Cys-387 lines the heme pocket.

It belongs to the cytochrome P450 family. Heme is required as a cofactor.

It is found in the membrane. Its pathway is secondary metabolite biosynthesis. Cytochrome P450 monooxygenase; part of the gene cluster that mediates the biosynthesis of the indole diterpenes penitrems. The geranylgeranyl diphosphate (GGPP) synthase penG catalyzes the first step in penitrem biosynthesis via conversion of farnesyl pyrophosphate and isopentyl pyrophosphate into geranylgeranyl pyrophosphate (GGPP). Condensation of indole-3-glycerol phosphate with GGPP by the prenyl transferase penC then forms 3-geranylgeranylindole (3-GGI). Epoxidation by the FAD-dependent monooxygenase penM leads to a epoxidized-GGI that is substrate of the terpene cyclase penB for cyclization to yield paspaline. Paspaline is subsequently converted to 13-desoxypaxilline by the cytochrome P450 monooxygenase penP, the latter being then converted to paxilline by the cytochrome P450 monooxygenase penQ. Paxilline is converted to beta-paxitriol via C-10 ketoreduction by the short-chain dehydrogenase PC-15 which can be monoprenylated at the C-20 by the indole diterpene prenyltransferase penD. A two-step elimination (acetylation and elimination) process performed by the O-acetyltransferase PC-16 and the P.simplicissimum ptmI-ortholog not yet identified in P.crustosum, leads to the production of the prenylated form of penijanthine. The FAD-linked oxidoreductase ptmO then converts the prenylated form of penijanthine into PC-M5 which is in turn transformed into PC-M4 by the aromatic dimethylallyltransferase PC-22. A series of oxidation steps involving 4 cytochrome P450 monooxygenases (PC-21, PC-05, PC-23, PC-20) and a FAD-dependent monooxygenase (PC-14) are required for the transformation of PC-M4 to penitrems A and E. Synthesis of these final products is proposed to proceed via penitrems D and C (PC-21, PC-05, PC-14) and penitrems B and F (PC-21, PC-05, PC-14, PC-23). This is Cytochrome P450 monooxygenase PC-20 from Penicillium crustosum (Blue mold fungus).